A 180-amino-acid polypeptide reads, in one-letter code: Protein NEQ441 (180 aa).

The AMMECR1 domain occupies 1 to 180 (MNLAKIARKI…VFEGQIFEED (180 aa)).

In Nanoarchaeum equitans (strain Kin4-M), this protein is Protein NEQ441.